The sequence spans 277 residues: Small ribosomal subunit protein uS2 (277 aa).

The interval 226-277 (GQQARADRGEDLGAAVEPVAEPALVEEAAAPVTEDEQVPAEAAAETERQSDA) is disordered. Residues 239–257 (AAVEPVAEPALVEEAAAPV) are compositionally biased toward low complexity.

It belongs to the universal ribosomal protein uS2 family.

This Sphingopyxis alaskensis (strain DSM 13593 / LMG 18877 / RB2256) (Sphingomonas alaskensis) protein is Small ribosomal subunit protein uS2.